A 113-amino-acid polypeptide reads, in one-letter code: MAGFGLPNFGQLTEAFRKAQQIQQNAQKLQEELDAMEIEGSSPDGRASIWLSGNQQPLRVRLEPSLLAEGQDASETAILAALQSAYEHSTTTMKEQMEELTGGLNLNLPGMSD.

A disordered region spans residues 90–113; the sequence is TTTMKEQMEELTGGLNLNLPGMSD.

This sequence belongs to the YbaB/EbfC family. Homodimer.

The protein localises to the cytoplasm. It is found in the nucleoid. Its function is as follows. Binds to DNA and alters its conformation. May be involved in regulation of gene expression, nucleoid organization and DNA protection. This is Nucleoid-associated protein P9303_00241 from Prochlorococcus marinus (strain MIT 9303).